A 454-amino-acid polypeptide reads, in one-letter code: MEEERRDDYKFLRIQDAFKALHLHVNLIGVIVELGFSNGSDCSCTLKIVDPWYSGSGLPVKFVARTIRDLPRVESIGDIILLSRVKIVLINRKITALCNETTSSSFALFNGKHSVDSIPYQSSPKFLMREQDKNFLSNLREWMITYKFEDGSCCFTSLKDIKEGECSNLSCQIVHISKVYKDRWYLFVWDGTEMPPCNILVKSERLPLCVEPEMLPTYMLRKFPTFGSVLRIIVDRVSEKQAIHCLQPGQHVKLLNLFFQVNMGLWNATFTPSTKMQYTMSREMEAFSPQRMCGEKFSPRWNPIARCISRSHSEITGVAHDDAPFVSLMDILTYHNVTAKFRCVVRFIQVYPRDVRKLRDINGNIKLVAILEDATARIHASLYADEGEKFFGCDESDEEALVKKLNRLLGGEEMEKVPRNPPWVQCCLFSFYKHKMDQWESRRFRIFDTWINAS.

Belongs to the telombin family. In terms of assembly, interacts with TRB1, TRB2 and TRB3. Expressed at low levels in roots, rosette leaves, cauline leaves, stems and flowers.

The protein localises to the nucleus. The protein resides in the chromosome. It is found in the telomere. Its function is as follows. Negatively regulates telomerase activity and participates in chromosome end protection. Binds RNA non-specifically. Associates with a regulatory Pol III-dependent lncRNA, which represses telomerase activity in response to DNA damage. Binds single-stranded telomeric DNA with weak affinity. This is Protection of telomeres protein 1b from Arabidopsis thaliana (Mouse-ear cress).